The sequence spans 468 residues: Protein phosphatase ppm-1.A (468 aa).

The tract at residues 1 to 23 (MTISRADLQIASSAEPKTHGNLN) is disordered. One can recognise a PPM-type phosphatase domain in the interval 106 to 381 (RYGMSSMQGW…DNMTMVVVCF (276 aa)). Mn(2+) contacts are provided by D145, G146, D329, and D372.

This sequence belongs to the PP2C family. Mg(2+) is required as a cofactor. The cofactor is Mn(2+). Expressed in neurons of the nerve ring and motor neurons of the ventral nerve cord.

The protein resides in the synapse. The enzyme catalyses O-phospho-L-seryl-[protein] + H2O = L-seryl-[protein] + phosphate. It catalyses the reaction O-phospho-L-threonyl-[protein] + H2O = L-threonyl-[protein] + phosphate. Functionally, probable phosphatase which regulates axon termination in ALM and PLM neurons, and synaptic branch extension and/or stabilization in PLM neurons. Plays a role in synapse formation in GABAergic DD motor neurons probably by dephosphorylating pmk-3 thereby negatively regulating a MAP kinase pathway that includes dlk-1, mkk-4 and pmk-3. This is Protein phosphatase ppm-1.A from Caenorhabditis elegans.